The following is a 35-amino-acid chain: Augerpeptide hheTx5 (35 aa).

Contains 4 disulfide bonds. In terms of tissue distribution, expressed by the venom duct.

Its subcellular location is the secreted. The polypeptide is Augerpeptide hheTx5 (Hastula hectica (Sea snail)).